The chain runs to 429 residues: UDP-N-acetylglucosamine 1-carboxyvinyltransferase 2 (429 aa).

Residue 22-23 participates in phosphoenolpyruvate binding; it reads KN. Residue Arg-93 participates in UDP-N-acetyl-alpha-D-glucosamine binding. The active-site Proton donor is the Cys-117. The residue at position 117 (Cys-117) is a 2-(S-cysteinyl)pyruvic acid O-phosphothioketal. UDP-N-acetyl-alpha-D-glucosamine contacts are provided by residues 122–126, Asp-305, and Ile-327; that span reads RPIDQ.

It belongs to the EPSP synthase family. MurA subfamily.

Its subcellular location is the cytoplasm. It catalyses the reaction phosphoenolpyruvate + UDP-N-acetyl-alpha-D-glucosamine = UDP-N-acetyl-3-O-(1-carboxyvinyl)-alpha-D-glucosamine + phosphate. Its pathway is cell wall biogenesis; peptidoglycan biosynthesis. Functionally, cell wall formation. Adds enolpyruvyl to UDP-N-acetylglucosamine. This Bacillus anthracis protein is UDP-N-acetylglucosamine 1-carboxyvinyltransferase 2.